A 219-amino-acid chain; its full sequence is Probable nicotinate-nucleotide adenylyltransferase (219 aa).

The protein belongs to the NadD family.

It catalyses the reaction nicotinate beta-D-ribonucleotide + ATP + H(+) = deamido-NAD(+) + diphosphate. It functions in the pathway cofactor biosynthesis; NAD(+) biosynthesis; deamido-NAD(+) from nicotinate D-ribonucleotide: step 1/1. Functionally, catalyzes the reversible adenylation of nicotinate mononucleotide (NaMN) to nicotinic acid adenine dinucleotide (NaAD). This Pseudoalteromonas atlantica (strain T6c / ATCC BAA-1087) protein is Probable nicotinate-nucleotide adenylyltransferase.